We begin with the raw amino-acid sequence, 663 residues long: Alpha-1,4-glucan:maltose-1-phosphate maltosyltransferase (663 aa).

Residues 238–266 (IGETNRKGPDDAPEAGPDDPGSPWAIGGF) are disordered. Alpha-maltose 1-phosphate-binding residues include K244, Q309, and D344. D380 acts as the Nucleophile in catalysis. N381 is an alpha-maltose 1-phosphate binding site. The active-site Proton donor is E409. An alpha-maltose 1-phosphate-binding site is contributed by 521-522 (KY).

Belongs to the glycosyl hydrolase 13 family. GlgE subfamily. In terms of assembly, homodimer.

The catalysed reaction is alpha-maltose 1-phosphate + [(1-&gt;4)-alpha-D-glucosyl](n) = [(1-&gt;4)-alpha-D-glucosyl](n+2) + phosphate. Maltosyltransferase that uses maltose 1-phosphate (M1P) as the sugar donor to elongate linear or branched alpha-(1-&gt;4)-glucans. Is involved in a branched alpha-glucan biosynthetic pathway from trehalose, together with TreS, Mak and GlgB. In Salinibacter ruber (strain DSM 13855 / M31), this protein is Alpha-1,4-glucan:maltose-1-phosphate maltosyltransferase.